Here is a 261-residue protein sequence, read N- to C-terminus: Putative cytochrome YdhU (261 aa).

The helical transmembrane segment at 25–45 (FWPVWLIIAGVLLVGMWLVLG) threads the bilayer. Histidine 77 serves as a coordination point for heme b. 3 helical membrane passes run 81–101 (ALLF…MVGA), 108–128 (VAVH…FVLI), and 182–202 (VAYV…GLLC). Histidine 111 contributes to the heme b binding site. 2 residues coordinate heme b: histidine 223 and histidine 237. The chain crosses the membrane as a helical span at residues 224 to 244 (FALAFISLFFIFGHLYLCTTG). Histidine 237 contacts a menaquinone.

Belongs to the PhsC family. It depends on heme as a cofactor.

It is found in the cell inner membrane. This is Putative cytochrome YdhU (ydhU) from Escherichia coli (strain K12).